A 109-amino-acid polypeptide reads, in one-letter code: Probable cytochrome b-c1 complex subunit 7 (109 aa).

It belongs to the UQCRB/QCR7 family. Component of the ubiquinol-cytochrome c oxidoreductase (cytochrome b-c1 complex, complex III, CIII), a multisubunit enzyme composed of 3 respiratory subunits cytochrome b, cytochrome c1 and Rieske protein, 2 core protein subunits, and additional low-molecular weight protein subunits. The complex exists as an obligatory dimer and forms supercomplexes (SCs) in the inner mitochondrial membrane with cytochrome c oxidase (complex IV, CIV).

It is found in the mitochondrion inner membrane. Its function is as follows. Component of the ubiquinol-cytochrome c oxidoreductase, a multisubunit transmembrane complex that is part of the mitochondrial electron transport chain which drives oxidative phosphorylation. The respiratory chain contains 3 multisubunit complexes succinate dehydrogenase (complex II, CII), ubiquinol-cytochrome c oxidoreductase (cytochrome b-c1 complex, complex III, CIII) and cytochrome c oxidase (complex IV, CIV), that cooperate to transfer electrons derived from NADH and succinate to molecular oxygen, creating an electrochemical gradient over the inner membrane that drives transmembrane transport and the ATP synthase. The cytochrome b-c1 complex catalyzes electron transfer from ubiquinol to cytochrome c, linking this redox reaction to translocation of protons across the mitochondrial inner membrane, with protons being carried across the membrane as hydrogens on the quinol. In the process called Q cycle, 2 protons are consumed from the matrix, 4 protons are released into the intermembrane space and 2 electrons are passed to cytochrome c. The protein is Probable cytochrome b-c1 complex subunit 7 of Dictyostelium discoideum (Social amoeba).